A 156-amino-acid polypeptide reads, in one-letter code: Transcriptional repressor NrdR (156 aa).

A zinc finger lies at 3–34; sequence CPYCGHLEDRVVDSRETQDGQATRRRRACLSC. Positions 49–139 constitute an ATP-cone domain; it reads PQVVKKDGRR…VYRAFRDVGE (91 aa).

The protein belongs to the NrdR family. Zn(2+) serves as cofactor.

Its function is as follows. Negatively regulates transcription of bacterial ribonucleotide reductase nrd genes and operons by binding to NrdR-boxes. This chain is Transcriptional repressor NrdR, found in Anaeromyxobacter dehalogenans (strain 2CP-C).